The sequence spans 610 residues: MENIFDAKAFLSRVTSQPGVYRMYDASGTVIYVGKAKDLKKRLSSYFRAQVNSRKTEALVKCIANIDVTVTHTETEALLLEHSYIQRYQPRYNVLLRDDKSYPYIYLSADKHPRLASYRGAKHAKGEYFGPFPNSLAVRETLALMQKLFPIRQCEDSVYRNRSRPCLQYQIGRCLAPCVKGYVSDEEYAQQVNYVRLFLSGDDSQVIEGLIKRMEEASQALRFEEAARIRDQIHAVRQVTEKQFVANIGDDLDVISVAFNGAIACVYVLFFRQGKVLGSRSYFPKVPANTSLDEVVQTFIGQFYLQGSAIRTLPTEILLDFNLEDKTILAESISSIAGRKIHIQTKPRGDRARYLKLARTNAATALATKQVEQSTISQRYNSLMSLLEMKEIKRMECFDISHTMGEQTVASCVVFDMNGPLKSEYRRYNISGITPGDDYAAMNQVLTRRYGKSLEESKIPDIIFIDGGKGQLAQAIDVFQSLDVDWDKSHPKLIGVAKGSDRKAGLETLFFKPEGEGVALPSDSPALHLIQHIRDESHRHAITGHRQRRAKVKNTSSLESIEGVGPKRRQMLLKYMGGLQALRDASVEEIAKVPTISTALAEKIFNALKH.

The 79-residue stretch at 16–94 (SQPGVYRMYD…IQRYQPRYNV (79 aa)) folds into the GIY-YIG domain. Residues 204–239 (SQVIEGLIKRMEEASQALRFEEAARIRDQIHAVRQV) enclose the UVR domain.

It belongs to the UvrC family. As to quaternary structure, interacts with UvrB in an incision complex.

The protein localises to the cytoplasm. The UvrABC repair system catalyzes the recognition and processing of DNA lesions. UvrC both incises the 5' and 3' sides of the lesion. The N-terminal half is responsible for the 3' incision and the C-terminal half is responsible for the 5' incision. This is UvrABC system protein C from Proteus mirabilis (strain HI4320).